Consider the following 248-residue polypeptide: PF03932 family protein CutC (248 aa).

It belongs to the CutC family. Homodimer.

It localises to the cytoplasm. This is PF03932 family protein CutC from Escherichia coli (strain SMS-3-5 / SECEC).